Consider the following 281-residue polypeptide: Pantothenate synthetase (281 aa).

17 to 24 (MGFLHEGH) is a binding site for ATP. The active-site Proton donor is H24. (R)-pantoate is bound at residue Q48. Q48 provides a ligand contact to beta-alanine. Residue 134–137 (GEKD) participates in ATP binding. Residue Q140 participates in (R)-pantoate binding. ATP is bound by residues V163 and 176-179 (LSSR).

The protein belongs to the pantothenate synthetase family. As to quaternary structure, homodimer.

The protein localises to the cytoplasm. The catalysed reaction is (R)-pantoate + beta-alanine + ATP = (R)-pantothenate + AMP + diphosphate + H(+). The protein operates within cofactor biosynthesis; (R)-pantothenate biosynthesis; (R)-pantothenate from (R)-pantoate and beta-alanine: step 1/1. Its function is as follows. Catalyzes the condensation of pantoate with beta-alanine in an ATP-dependent reaction via a pantoyl-adenylate intermediate. The chain is Pantothenate synthetase from Deinococcus radiodurans (strain ATCC 13939 / DSM 20539 / JCM 16871 / CCUG 27074 / LMG 4051 / NBRC 15346 / NCIMB 9279 / VKM B-1422 / R1).